A 146-amino-acid polypeptide reads, in one-letter code: Small ribosomal subunit protein uS13A (146 aa).

Ser-2 is modified (N-acetylserine). A Glycyl lysine isopeptide (Lys-Gly) (interchain with G-Cter in ubiquitin) cross-link involves residue Lys-36. Position 48 is an N6-methyllysine; by RKM1 (Lys-48). Residues Lys-49, Lys-80, and Lys-96 each participate in a glycyl lysine isopeptide (Lys-Gly) (interchain with G-Cter in ubiquitin) cross-link.

This sequence belongs to the universal ribosomal protein uS13 family. As to quaternary structure, component of the small ribosomal subunit (SSU). Mature yeast ribosomes consist of a small (40S) and a large (60S) subunit. The 40S small subunit contains 1 molecule of ribosomal RNA (18S rRNA) and 33 different proteins (encoded by 57 genes). The large 60S subunit contains 3 rRNA molecules (25S, 5.8S and 5S rRNA) and 46 different proteins (encoded by 81 genes). Post-translationally, N-terminally acetylated by acetyltransferase NatA.

The protein resides in the cytoplasm. Component of the ribosome, a large ribonucleoprotein complex responsible for the synthesis of proteins in the cell. The small ribosomal subunit (SSU) binds messenger RNAs (mRNAs) and translates the encoded message by selecting cognate aminoacyl-transfer RNA (tRNA) molecules. The large subunit (LSU) contains the ribosomal catalytic site termed the peptidyl transferase center (PTC), which catalyzes the formation of peptide bonds, thereby polymerizing the amino acids delivered by tRNAs into a polypeptide chain. The nascent polypeptides leave the ribosome through a tunnel in the LSU and interact with protein factors that function in enzymatic processing, targeting, and the membrane insertion of nascent chains at the exit of the ribosomal tunnel. This chain is Small ribosomal subunit protein uS13A, found in Saccharomyces cerevisiae (strain ATCC 204508 / S288c) (Baker's yeast).